The chain runs to 214 residues: Large ribosomal subunit protein bL25 (214 aa).

Positions 179–214 (VPPTQGPSEAEIEEVEAGDADTPEPEVVGEKEEDEE) are disordered. A compositionally biased stretch (acidic residues) spans 188-202 (AEIEEVEAGDADTPE).

Belongs to the bacterial ribosomal protein bL25 family. CTC subfamily. Part of the 50S ribosomal subunit; part of the 5S rRNA/L5/L18/L25 subcomplex. Contacts the 5S rRNA. Binds to the 5S rRNA independently of L5 and L18.

Functionally, this is one of the proteins that binds to the 5S RNA in the ribosome where it forms part of the central protuberance. This chain is Large ribosomal subunit protein bL25, found in Staphylococcus carnosus (strain TM300).